Here is an 853-residue protein sequence, read N- to C-terminus: DNA mismatch repair protein MutS (853 aa).

Glycine 614 to serine 621 contacts ATP.

This sequence belongs to the DNA mismatch repair MutS family.

In terms of biological role, this protein is involved in the repair of mismatches in DNA. It is possible that it carries out the mismatch recognition step. This protein has a weak ATPase activity. The protein is DNA mismatch repair protein MutS of Escherichia coli (strain SE11).